Consider the following 170-residue polypeptide: uncharacterized protein (170 aa).

The Cytoplasmic segment spans residues 1–15 (MFLTSPFESCIVLSS). Residues 16–36 (LIAGLLFSLSTGFVGILGVFA) traverse the membrane as a helical segment. Over 37-76 (SLFETELSVSPKRLSLSSLSWPKTFWALLSSVEGVSWESS) the chain is Extracellular. The chain crosses the membrane as a helical span at residues 77 to 97 (LFACIVGCCFAVTVIASLSAS). The Cytoplasmic segment spans residues 98-119 (RVFGTVASSFRDSSCCCDSSPA). The helical transmembrane segment at 120–140 (VSVLATPATAALALLSLLLSL) threads the bilayer. The Extracellular segment spans residues 141-170 (PCWSTSTEAFTVDPSPSVFSMLANRITIGL).

Its subcellular location is the membrane. This is an uncharacterized protein from Saccharomyces cerevisiae (strain ATCC 204508 / S288c) (Baker's yeast).